Reading from the N-terminus, the 669-residue chain is DNA ligase (669 aa).

NAD(+) is bound by residues 32–36 (DAEYD), 81–82 (SL), and Glu-113. Residue Lys-115 is the N6-AMP-lysine intermediate of the active site. NAD(+) is bound by residues Arg-136, Glu-173, Lys-290, and Lys-314. Cys-408, Cys-411, Cys-426, and Cys-432 together coordinate Zn(2+). Positions 592 to 669 (AVDSALAGKI…DEQALIEFLK (78 aa)) constitute a BRCT domain.

It belongs to the NAD-dependent DNA ligase family. LigA subfamily. Mg(2+) serves as cofactor. Requires Mn(2+) as cofactor.

It catalyses the reaction NAD(+) + (deoxyribonucleotide)n-3'-hydroxyl + 5'-phospho-(deoxyribonucleotide)m = (deoxyribonucleotide)n+m + AMP + beta-nicotinamide D-nucleotide.. Functionally, DNA ligase that catalyzes the formation of phosphodiester linkages between 5'-phosphoryl and 3'-hydroxyl groups in double-stranded DNA using NAD as a coenzyme and as the energy source for the reaction. It is essential for DNA replication and repair of damaged DNA. The sequence is that of DNA ligase from Vibrio cholerae serotype O1 (strain ATCC 39315 / El Tor Inaba N16961).